Reading from the N-terminus, the 144-residue chain is Cytochrome c oxidase subunit 4 isoform 1, mitochondrial (144 aa).

Topologically, residues 1–73 are mitochondrial matrix; that stretch reads SVVKSEDFSL…SFAEMNRGSN (73 aa). Residue K4 is modified to N6-acetyllysine; alternate. K4 is modified (N6-succinyllysine; alternate). An N6-acetyllysine modification is found at K28. A phosphoserine mark is found at S31 and S33. Position 35 is an N6-acetyllysine; alternate (K35). An N6-succinyllysine; alternate modification is found at K35. K42 is modified (N6-acetyllysine). A helical membrane pass occupies residues 74–99; it reads EWKTVVGGAMFFIGFTALIIMWQKRH. The Mitochondrial intermembrane segment spans residues 100 to 144; sequence VYGPLPQSFDKEWVAKQTKRMLDMKVNPIQGLASKWDYEKNEWKK.

Belongs to the cytochrome c oxidase IV family. Component of the cytochrome c oxidase (complex IV, CIV), a multisubunit enzyme composed of 14 subunits. The complex is composed of a catalytic core of 3 subunits MT-CO1, MT-CO2 and MT-CO3, encoded in the mitochondrial DNA, and 11 supernumerary subunits COX4I, COX5A, COX5B, COX6A, COX6B, COX6C, COX7A, COX7B, COX7C, COX8 and NDUFA4, which are encoded in the nuclear genome. The complex exists as a monomer or a dimer and forms supercomplexes (SCs) in the inner mitochondrial membrane with NADH-ubiquinone oxidoreductase (complex I, CI) and ubiquinol-cytochrome c oxidoreductase (cytochrome b-c1 complex, complex III, CIII), resulting in different assemblies (supercomplex SCI(1)III(2)IV(1) and megacomplex MCI(2)III(2)IV(2)). Interacts with PHB2; the interaction decreases in absence of SPHK2. Interacts with AFG1L. Interacts with ABCB7; this interaction allows the regulation of cellular iron homeostasis and cellular reactive oxygen species (ROS) levels in cardiomyocytes. Interacts with FLVCR2; this interaction occurs in the absence of heme and is disrupted upon heme binding. Interacts with IRGC.

The protein resides in the mitochondrion inner membrane. The protein operates within energy metabolism; oxidative phosphorylation. Functionally, component of the cytochrome c oxidase, the last enzyme in the mitochondrial electron transport chain which drives oxidative phosphorylation. The respiratory chain contains 3 multisubunit complexes succinate dehydrogenase (complex II, CII), ubiquinol-cytochrome c oxidoreductase (cytochrome b-c1 complex, complex III, CIII) and cytochrome c oxidase (complex IV, CIV), that cooperate to transfer electrons derived from NADH and succinate to molecular oxygen, creating an electrochemical gradient over the inner membrane that drives transmembrane transport and the ATP synthase. Cytochrome c oxidase is the component of the respiratory chain that catalyzes the reduction of oxygen to water. Electrons originating from reduced cytochrome c in the intermembrane space (IMS) are transferred via the dinuclear copper A center (CU(A)) of subunit 2 and heme A of subunit 1 to the active site in subunit 1, a binuclear center (BNC) formed by heme A3 and copper B (CU(B)). The BNC reduces molecular oxygen to 2 water molecules using 4 electrons from cytochrome c in the IMS and 4 protons from the mitochondrial matrix. The polypeptide is Cytochrome c oxidase subunit 4 isoform 1, mitochondrial (COX4I1) (Pongo pygmaeus (Bornean orangutan)).